The primary structure comprises 349 residues: Alanine racemase (349 aa).

The active-site Proton acceptor; specific for D-alanine is Lys-35. The residue at position 35 (Lys-35) is an N6-(pyridoxal phosphate)lysine. Arg-130 provides a ligand contact to substrate. The Proton acceptor; specific for L-alanine role is filled by Tyr-244. Met-292 contributes to the substrate binding site.

It belongs to the alanine racemase family. It depends on pyridoxal 5'-phosphate as a cofactor.

It catalyses the reaction L-alanine = D-alanine. It functions in the pathway amino-acid biosynthesis; D-alanine biosynthesis; D-alanine from L-alanine: step 1/1. Functionally, catalyzes the interconversion of L-alanine and D-alanine. May also act on other amino acids. The protein is Alanine racemase (alr) of Dinoroseobacter shibae (strain DSM 16493 / NCIMB 14021 / DFL 12).